The primary structure comprises 414 residues: Glucose-1-phosphate adenylyltransferase (414 aa).

Alpha-D-glucose 1-phosphate is bound by residues Y103, G168, 183–184, and S201; that span reads EK.

This sequence belongs to the bacterial/plant glucose-1-phosphate adenylyltransferase family. Homotetramer.

It catalyses the reaction alpha-D-glucose 1-phosphate + ATP + H(+) = ADP-alpha-D-glucose + diphosphate. Its pathway is glycan biosynthesis; glycogen biosynthesis. In terms of biological role, involved in the biosynthesis of ADP-glucose, a building block required for the elongation reactions to produce glycogen. Catalyzes the reaction between ATP and alpha-D-glucose 1-phosphate (G1P) to produce pyrophosphate and ADP-Glc. This chain is Glucose-1-phosphate adenylyltransferase, found in Thermus caldophilus.